Consider the following 208-residue polypeptide: Uracil phosphoribosyltransferase (208 aa).

5-phospho-alpha-D-ribose 1-diphosphate is bound by residues R78, R103, and D130–S138. Residues I193 and G198–A200 each bind uracil. D199 is a 5-phospho-alpha-D-ribose 1-diphosphate binding site.

The protein belongs to the UPRTase family. Mg(2+) is required as a cofactor.

The enzyme catalyses UMP + diphosphate = 5-phospho-alpha-D-ribose 1-diphosphate + uracil. Its pathway is pyrimidine metabolism; UMP biosynthesis via salvage pathway; UMP from uracil: step 1/1. Allosterically activated by GTP. Its function is as follows. Catalyzes the conversion of uracil and 5-phospho-alpha-D-ribose 1-diphosphate (PRPP) to UMP and diphosphate. This is Uracil phosphoribosyltransferase from Psychromonas ingrahamii (strain DSM 17664 / CCUG 51855 / 37).